We begin with the raw amino-acid sequence, 53 residues long: Toxin CjTL7 (53 aa).

Positions 1-22 are cleaved as a signal peptide; sequence MMIKVLLLLSSALVLFTPEAEG. Tryptophan amide is present on Trp-51.

Post-translationally, contains 4 disulfide bonds.

It is found in the secreted. The protein resides in the nematocyst. Functionally, in vivo, only causes a weak change in behavior in shrimps (C.multidentata) (slight twitching of the walking legs), but no lethal effect is observed. No activity is observed when injected into fly larvae (M.domestica). This is Toxin CjTL7 from Epiactis japonica (Sea anemone).